The following is a 566-amino-acid chain: Membrane protein insertase YidC (566 aa).

5 helical membrane passes run 3-23 (IKRI…FNAW), 346-366 (GWLW…HAVV), 369-389 (WGWS…WFSA), 436-456 (GGCL…YVII), and 509-529 (MWIL…GLVL).

This sequence belongs to the OXA1/ALB3/YidC family. Type 1 subfamily. As to quaternary structure, interacts with the Sec translocase complex via SecD. Specifically interacts with transmembrane segments of nascent integral membrane proteins during membrane integration.

The protein localises to the cell inner membrane. Functionally, required for the insertion and/or proper folding and/or complex formation of integral membrane proteins into the membrane. Involved in integration of membrane proteins that insert both dependently and independently of the Sec translocase complex, as well as at least some lipoproteins. Aids folding of multispanning membrane proteins. In Coxiella burnetii (strain Dugway 5J108-111), this protein is Membrane protein insertase YidC.